Here is a 124-residue protein sequence, read N- to C-terminus: Small ribosomal subunit protein uS12 (124 aa).

Asp89 is modified (3-methylthioaspartic acid).

The protein belongs to the universal ribosomal protein uS12 family. As to quaternary structure, part of the 30S ribosomal subunit. Contacts proteins S8 and S17. May interact with IF1 in the 30S initiation complex.

Its function is as follows. With S4 and S5 plays an important role in translational accuracy. Functionally, interacts with and stabilizes bases of the 16S rRNA that are involved in tRNA selection in the A site and with the mRNA backbone. Located at the interface of the 30S and 50S subunits, it traverses the body of the 30S subunit contacting proteins on the other side and probably holding the rRNA structure together. The combined cluster of proteins S8, S12 and S17 appears to hold together the shoulder and platform of the 30S subunit. The sequence is that of Small ribosomal subunit protein uS12 from Serratia proteamaculans (strain 568).